The following is a 562-amino-acid chain: 3-(3-hydroxy-phenyl)propionate/3-hydroxycinnamic acid hydroxylase (562 aa).

FAD contacts are provided by residues 8–37 and 275–285; these read DVVI…IIEE and FRKGRMLLAGD.

The protein belongs to the PheA/TfdB FAD monooxygenase family. The cofactor is FAD.

It carries out the reaction 3-(3-hydroxyphenyl)propanoate + NADH + O2 + H(+) = 3-(2,3-dihydroxyphenyl)propanoate + NAD(+) + H2O. The catalysed reaction is (2E)-3-(3-hydroxyphenyl)prop-2-enoate + NADH + O2 + H(+) = (2E)-3-(2,3-dihydroxyphenyl)prop-2-enoate + NAD(+) + H2O. Its pathway is aromatic compound metabolism; 3-phenylpropanoate degradation. Its function is as follows. Catalyzes the insertion of one atom of molecular oxygen into position 2 of the phenyl ring of 3-(3-hydroxyphenyl)propionate (3-HPP) and hydroxycinnamic acid (3HCI). The chain is 3-(3-hydroxy-phenyl)propionate/3-hydroxycinnamic acid hydroxylase from Mycolicibacterium smegmatis (strain ATCC 700084 / mc(2)155) (Mycobacterium smegmatis).